A 241-amino-acid polypeptide reads, in one-letter code: Ribonuclease PH (241 aa).

Phosphate contacts are provided by residues R89 and 127–129 (GTR).

It belongs to the RNase PH family. Homohexameric ring arranged as a trimer of dimers.

It catalyses the reaction tRNA(n+1) + phosphate = tRNA(n) + a ribonucleoside 5'-diphosphate. Functionally, phosphorolytic 3'-5' exoribonuclease that plays an important role in tRNA 3'-end maturation. Removes nucleotide residues following the 3'-CCA terminus of tRNAs; can also add nucleotides to the ends of RNA molecules by using nucleoside diphosphates as substrates, but this may not be physiologically important. Probably plays a role in initiation of 16S rRNA degradation (leading to ribosome degradation) during starvation. In Xylella fastidiosa (strain 9a5c), this protein is Ribonuclease PH.